We begin with the raw amino-acid sequence, 193 residues long: Holliday junction branch migration complex subunit RuvA (193 aa).

The interval 1 to 64 (MIGRIAGILL…EDAHLLYGFL (64 aa)) is domain I. Positions 65-139 (TPQERTTFRE…GKLGADLGAL (75 aa)) are domain II. Residues 139-143 (LAGAA) form a flexible linker region. Residues 144 to 193 (SQSDHATDILNALVALGYSEKEGLAAIKNVPAGTGVSEGIKLALKALSKV) are domain III.

It belongs to the RuvA family. Homotetramer. Forms an RuvA(8)-RuvB(12)-Holliday junction (HJ) complex. HJ DNA is sandwiched between 2 RuvA tetramers; dsDNA enters through RuvA and exits via RuvB. An RuvB hexamer assembles on each DNA strand where it exits the tetramer. Each RuvB hexamer is contacted by two RuvA subunits (via domain III) on 2 adjacent RuvB subunits; this complex drives branch migration. In the full resolvosome a probable DNA-RuvA(4)-RuvB(12)-RuvC(2) complex forms which resolves the HJ.

It is found in the cytoplasm. The RuvA-RuvB-RuvC complex processes Holliday junction (HJ) DNA during genetic recombination and DNA repair, while the RuvA-RuvB complex plays an important role in the rescue of blocked DNA replication forks via replication fork reversal (RFR). RuvA specifically binds to HJ cruciform DNA, conferring on it an open structure. The RuvB hexamer acts as an ATP-dependent pump, pulling dsDNA into and through the RuvAB complex. HJ branch migration allows RuvC to scan DNA until it finds its consensus sequence, where it cleaves and resolves the cruciform DNA. The sequence is that of Holliday junction branch migration complex subunit RuvA from Burkholderia ambifaria (strain MC40-6).